A 106-amino-acid chain; its full sequence is Small ribosomal subunit protein bS20 (106 aa).

Positions M1–V20 are enriched in basic residues. The interval M1–R21 is disordered.

Belongs to the bacterial ribosomal protein bS20 family.

Its function is as follows. Binds directly to 16S ribosomal RNA. The polypeptide is Small ribosomal subunit protein bS20 (Polaromonas naphthalenivorans (strain CJ2)).